The following is a 274-amino-acid chain: NH(3)-dependent NAD(+) synthetase (274 aa).

Gly-46–Ser-53 provides a ligand contact to ATP. Position 52 (Asp-52) interacts with Mg(2+). Arg-140 is a deamido-NAD(+) binding site. Thr-160 contacts ATP. Residue Glu-165 coordinates Mg(2+). 2 residues coordinate deamido-NAD(+): Lys-173 and Asp-180. 2 residues coordinate ATP: Lys-189 and Thr-211. His-260 to Lys-261 is a binding site for deamido-NAD(+).

Belongs to the NAD synthetase family. Homodimer.

The catalysed reaction is deamido-NAD(+) + NH4(+) + ATP = AMP + diphosphate + NAD(+) + H(+). The protein operates within cofactor biosynthesis; NAD(+) biosynthesis; NAD(+) from deamido-NAD(+) (ammonia route): step 1/1. In terms of biological role, catalyzes the ATP-dependent amidation of deamido-NAD to form NAD. Uses ammonia as a nitrogen source. In Streptococcus pneumoniae serotype 2 (strain D39 / NCTC 7466), this protein is NH(3)-dependent NAD(+) synthetase.